The primary structure comprises 98 residues: Protein FAM24A (98 aa).

The N-terminal stretch at 1–29 (MFDLRTKVMIGIASTLLIAAIVLITVVFC) is a signal peptide.

The protein belongs to the FAM24 family.

It is found in the secreted. This chain is Protein FAM24A (Fam24a), found in Rattus norvegicus (Rat).